Consider the following 95-residue polypeptide: Aspartyl/glutamyl-tRNA(Asn/Gln) amidotransferase subunit C (95 aa).

The segment at 74–95 (GQALEPAPDADNEHFLVPQVVE) is disordered.

This sequence belongs to the GatC family. As to quaternary structure, heterotrimer of A, B and C subunits.

It carries out the reaction L-glutamyl-tRNA(Gln) + L-glutamine + ATP + H2O = L-glutaminyl-tRNA(Gln) + L-glutamate + ADP + phosphate + H(+). The enzyme catalyses L-aspartyl-tRNA(Asn) + L-glutamine + ATP + H2O = L-asparaginyl-tRNA(Asn) + L-glutamate + ADP + phosphate + 2 H(+). Its function is as follows. Allows the formation of correctly charged Asn-tRNA(Asn) or Gln-tRNA(Gln) through the transamidation of misacylated Asp-tRNA(Asn) or Glu-tRNA(Gln) in organisms which lack either or both of asparaginyl-tRNA or glutaminyl-tRNA synthetases. The reaction takes place in the presence of glutamine and ATP through an activated phospho-Asp-tRNA(Asn) or phospho-Glu-tRNA(Gln). In Salinibacter ruber (strain DSM 13855 / M31), this protein is Aspartyl/glutamyl-tRNA(Asn/Gln) amidotransferase subunit C.